Reading from the N-terminus, the 332-residue chain is L-lactate dehydrogenase A chain (332 aa).

NAD(+) contacts are provided by residues 29-57 (GAVG…VEDK) and arginine 99. The substrate site is built by arginine 106, asparagine 138, and arginine 169. NAD(+) is bound at residue asparagine 138. Residue histidine 193 is the Proton acceptor of the active site. Threonine 248 is a binding site for substrate.

This sequence belongs to the LDH/MDH superfamily. LDH family. Homotetramer.

Its subcellular location is the cytoplasm. It catalyses the reaction (S)-lactate + NAD(+) = pyruvate + NADH + H(+). The protein operates within fermentation; pyruvate fermentation to lactate; (S)-lactate from pyruvate: step 1/1. Interconverts simultaneously and stereospecifically pyruvate and lactate with concomitant interconversion of NADH and NAD(+). The sequence is that of L-lactate dehydrogenase A chain (LDHA) from Columba livia (Rock dove).